A 155-amino-acid polypeptide reads, in one-letter code: Ribosomal RNA large subunit methyltransferase H (155 aa).

Residues leucine 73, glycine 104, and 123-128 (LSALTL) contribute to the S-adenosyl-L-methionine site.

Belongs to the RNA methyltransferase RlmH family. Homodimer.

It localises to the cytoplasm. The catalysed reaction is pseudouridine(1915) in 23S rRNA + S-adenosyl-L-methionine = N(3)-methylpseudouridine(1915) in 23S rRNA + S-adenosyl-L-homocysteine + H(+). Specifically methylates the pseudouridine at position 1915 (m3Psi1915) in 23S rRNA. This chain is Ribosomal RNA large subunit methyltransferase H, found in Saccharophagus degradans (strain 2-40 / ATCC 43961 / DSM 17024).